Consider the following 72-residue polypeptide: uncharacterized protein (72 aa).

The disordered stretch occupies residues 51-72 (AKGGRQRGETVVVDDQCKEHKE).

The protein belongs to the YiiE family.

This is an uncharacterized protein from Escherichia coli O6:K15:H31 (strain 536 / UPEC).